A 62-amino-acid chain; its full sequence is Cryptic Mu-phage protein com (62 aa).

It belongs to the com family.

This Shigella dysenteriae protein is Cryptic Mu-phage protein com.